The following is a 349-amino-acid chain: E3 ubiquitin-protein ligase SINA-like 10 (349 aa).

The disordered stretch occupies residues 1 to 77; the sequence is MARFSVCGGD…STSDDSDREV (77 aa). The RING-type; degenerate zinc-finger motif lies at 113 to 149; the sequence is CPICCEPLKIPIFQCDNGHLACTLCCTKVRNRCPSCT. The tract at residues 163 to 344 is SBD; sequence VIEASRVSCL…NLQIWIGHGR (182 aa). The segment at 166–224 adopts an SIAH-type zinc-finger fold; the sequence is ASRVSCLNAKYGCKESTSYGNRFSHEQVCVFTPCSCPILDCHYTGYYKDLNNHVRAEHK. Positions 171, 178, 190, 194, 201, 206, 218, and 223 each coordinate Zn(2+).

This sequence belongs to the SINA (Seven in absentia) family.

The enzyme catalyses S-ubiquitinyl-[E2 ubiquitin-conjugating enzyme]-L-cysteine + [acceptor protein]-L-lysine = [E2 ubiquitin-conjugating enzyme]-L-cysteine + N(6)-ubiquitinyl-[acceptor protein]-L-lysine.. The protein operates within protein modification; protein ubiquitination. Its function is as follows. E3 ubiquitin-protein ligase that mediates ubiquitination and subsequent proteasomal degradation of target proteins. E3 ubiquitin ligases accept ubiquitin from an E2 ubiquitin-conjugating enzyme in the form of a thioester and then directly transfers the ubiquitin to targeted substrates. It probably triggers the ubiquitin-mediated degradation of different substrates. In Arabidopsis thaliana (Mouse-ear cress), this protein is E3 ubiquitin-protein ligase SINA-like 10.